Here is a 219-residue protein sequence, read N- to C-terminus: Peroxiredoxin (219 aa).

A Thioredoxin domain is found at 2 to 164 (PLIGDDAPSF…IKRIVVALQK (163 aa)). The active-site Cysteine sulfenic acid (-SOH) intermediate is Cys44. Arg127 serves as a coordination point for substrate. A disulfide bridge links Cys206 with Cys212.

This sequence belongs to the peroxiredoxin family. Prx6 subfamily. In terms of assembly, homodecamer. Pentamer of dimers that assemble into a ring structure.

It localises to the cytoplasm. The catalysed reaction is a hydroperoxide + [thioredoxin]-dithiol = an alcohol + [thioredoxin]-disulfide + H2O. Its function is as follows. Thiol-specific peroxidase that catalyzes the reduction of hydrogen peroxide and organic hydroperoxides to water and alcohols, respectively. Plays a role in cell protection against oxidative stress by detoxifying peroxides. In Methanosarcina mazei (strain ATCC BAA-159 / DSM 3647 / Goe1 / Go1 / JCM 11833 / OCM 88) (Methanosarcina frisia), this protein is Peroxiredoxin.